Here is a 209-residue protein sequence, read N- to C-terminus: Thymidine kinase (209 aa).

ATP is bound by residues Gly-25–Thr-32 and Asp-103–Gln-106. The Proton acceptor role is filled by Glu-104. Zn(2+) is bound by residues Cys-160, Cys-163, Cys-198, and Cys-201.

It belongs to the thymidine kinase family. In terms of assembly, homotetramer.

The protein resides in the cytoplasm. It carries out the reaction thymidine + ATP = dTMP + ADP + H(+). The protein is Thymidine kinase of Mycoplasma mycoides subsp. mycoides SC (strain CCUG 32753 / NCTC 10114 / PG1).